The sequence spans 643 residues: MSRPSTPLLDKAPTPDRLRALPEQDLPQLAEELRTELIDAVSTTGGHLGAGLGVVELTVALHHVFNTPYDRIIWDVGHQAYPHKILTGRRDRIRTLRQAGGLSGFTKRAESEYDPFGAAHSSTSISAGLGMAVASELSGEKRNVIAVIGDGSMSAGMAYEAMNNAGALDARLIVILNDNDMSIAPPTGAMSAYLARLVSGRTYRSVREAAKQVAQKLPKFLQDKARKSEEYARAFFTGGTLFEELGFYYVGPIDGHNLDHLLPVLKNVRDTQKGPVLIHVVTQKGKGYAPAEAAADKYHGVNKFDVITGKQAKPPANVPSYTKIFGTSLIEEARHDDKIVAVTAAMPTGTGLDLFGEAFPKRVFDVGIAEQHAVTFAAGLASEGYKPFCAIYSTFLQRGYDQVVHDVSIQNLPVRFPIDRAGLVGADGPTHAGSFDTGFLAALPGFVVMAASDEAELRHMVRTAAEYDEGPISFRYPRGDGVGVDLPERGSVLEIGKGRIVREGTKVALLSFGTRLQECLAAAEELGAAGLSTTVADARFAKPLDHDLIRRLAREHEVLVMVEEGAVGGFGSHVLQFLATDGLLDRGLKVRALTLPDIYQDHGKPDAMYAEAGLDRTGIVRTVFAALHRDELGHEALPTPFRA.

Thiamine diphosphate-binding positions include histidine 78 and 119-121 (AHS). A Mg(2+)-binding site is contributed by aspartate 150. Residues 151 to 152 (GS), asparagine 179, tyrosine 288, and glutamate 370 contribute to the thiamine diphosphate site. Position 179 (asparagine 179) interacts with Mg(2+).

The protein belongs to the transketolase family. DXPS subfamily. As to quaternary structure, homodimer. Mg(2+) serves as cofactor. Thiamine diphosphate is required as a cofactor.

The catalysed reaction is D-glyceraldehyde 3-phosphate + pyruvate + H(+) = 1-deoxy-D-xylulose 5-phosphate + CO2. Its pathway is metabolic intermediate biosynthesis; 1-deoxy-D-xylulose 5-phosphate biosynthesis; 1-deoxy-D-xylulose 5-phosphate from D-glyceraldehyde 3-phosphate and pyruvate: step 1/1. Catalyzes the acyloin condensation reaction between C atoms 2 and 3 of pyruvate and glyceraldehyde 3-phosphate to yield 1-deoxy-D-xylulose-5-phosphate (DXP). The polypeptide is 1-deoxy-D-xylulose-5-phosphate synthase (Brucella canis (strain ATCC 23365 / NCTC 10854 / RM-666)).